The primary structure comprises 310 residues: tRNA pseudouridine synthase B (310 aa).

The active-site Nucleophile is Asp-47.

This sequence belongs to the pseudouridine synthase TruB family. Type 1 subfamily.

The catalysed reaction is uridine(55) in tRNA = pseudouridine(55) in tRNA. Responsible for synthesis of pseudouridine from uracil-55 in the psi GC loop of transfer RNAs. The chain is tRNA pseudouridine synthase B from Caulobacter vibrioides (strain ATCC 19089 / CIP 103742 / CB 15) (Caulobacter crescentus).